The primary structure comprises 318 residues: MTLSAWFVAFLLDHWLGDPPRWPHPVRWMGNLITLLQRAIRTLCHSEWALKWGGAVLWLLVVGITWLVSWGFLWLMTEINPWLGWLAQVWMIYTLLAGRCLSDAALAVFDALQHGTLAQSREKLSWIVGRDTSQLEKPQITRAVVETVAENSVDGVIAPLFFLMLGGAPLAMAYKAVNTLDSMVGYKTPKYRAIGYMSARMDDLANWLPARLSWVLLSAAAWLIQADYRQALRIGWRDRYQHSSPNCAWSEATVAGALGIRLGGPNDYCGERVEKPWIGDERREVALSDIPRSIHLMMMASLLALLLFALTHLLLVGI.

5 helical membrane-spanning segments follow: residues 56-76 (VLWLLVVGITWLVSWGFLWLM), 78-98 (EINPWLGWLAQVWMIYTLLAG), 153-173 (VDGVIAPLFFLMLGGAPLAMA), 204-224 (LANWLPARLSWVLLSAAAWLI), and 298-318 (MMASLLALLLFALTHLLLVGI).

The protein belongs to the CobD/CbiB family.

The protein resides in the cell membrane. The protein operates within cofactor biosynthesis; adenosylcobalamin biosynthesis. Converts cobyric acid to cobinamide by the addition of aminopropanol on the F carboxylic group. This Yersinia enterocolitica serotype O:8 / biotype 1B (strain NCTC 13174 / 8081) protein is Cobalamin biosynthesis protein CobD.